We begin with the raw amino-acid sequence, 323 residues long: Serpentine receptor class gamma-5 (323 aa).

The next 7 membrane-spanning stretches (helical) occupy residues 31–51 (QLFY…IMLF), 63–83 (FIIF…DLFI), 98–117 (YPLF…IYNY), 151–171 (IPVT…NVII), 193–213 (WASL…ITVF), 245–265 (AAFF…ITAA), and 272–292 (FLQG…MVLI).

The protein belongs to the nematode receptor-like protein srg family.

It localises to the membrane. This is Serpentine receptor class gamma-5 (srg-5) from Caenorhabditis elegans.